Reading from the N-terminus, the 131-residue chain is Small ribosomal subunit protein bS6 (131 aa).

Residues 98–131 (EASPMARARDERDSRRGPAGERSYDEAHAEEIGE) form a disordered region. Over residues 104-131 (RARDERDSRRGPAGERSYDEAHAEEIGE) the composition is skewed to basic and acidic residues.

This sequence belongs to the bacterial ribosomal protein bS6 family.

Its function is as follows. Binds together with bS18 to 16S ribosomal RNA. The sequence is that of Small ribosomal subunit protein bS6 from Shewanella putrefaciens (strain CN-32 / ATCC BAA-453).